A 91-amino-acid polypeptide reads, in one-letter code: uncharacterized protein (91 aa).

A helical membrane pass occupies residues 50-70 (FGFFGGPFIGGLAGGLIGSAL).

It localises to the cell membrane. This is an uncharacterized protein from Bacillus subtilis (strain 168).